We begin with the raw amino-acid sequence, 121 residues long: Protein MGF 110-14L (121 aa).

The N-terminal stretch at methionine 1–alanine 17 is a signal peptide.

The protein belongs to the asfivirus MGF 110 family.

This African swine fever virus (isolate Portugal/Lis 57/1957) (ASFV) protein is Protein MGF 110-14L.